The primary structure comprises 439 residues: MSLANVVVIGAQWGDEGKGKITDLLSRSADVVVRYQGGVNAGHTIVVDGRVLKLHLIPSGILYPDTICLIGPGTVVDPKVMLGELDMLLANDIDISGLRLASSAHVTMPYHRLLDLAMEKQRGDRRIGTTGRGIGPTYADKSQRSGIRVIDLLDEQRLRNRLEGPLTEKNELLEKIYGIEPLDGEAVIQEYLGYGQRLSKHVVDCTRAIHSAAKARKNILFEGAQGTLLDLDHGTYPYVTSSNPVSGGACIGAGVGPTLIDRVIGVAKAYTTRVGEGPFPTELSGSLNDQLTERGGEFGTTTGRRRRCGWFDGVIGRYAVQVNGLDCLAITKLDVLDEMDEIQVCVAYELDGERIEYFPSSSDDFARCKPIFETMKGWQCSTEECRKLEDLPKAAMDYLRFLADLMEVPIAIVSLGASRDQTIVVEDPIHGPKRALLSA.

Residues 14-20 and 42-44 contribute to the GTP site; these read GDEGKGK and GHT. Catalysis depends on D15, which acts as the Proton acceptor. Mg(2+)-binding residues include D15 and G42. IMP contacts are provided by residues 15–18, 40–43, T130, R144, Q225, T240, and R304; these read DEGK and NAGH. H43 serves as the catalytic Proton donor. Substrate is bound at residue 300-306; it reads TTTGRRR. Residues R306, 332–334, and 414–416 contribute to the GTP site; these read KLD and SLG.

It belongs to the adenylosuccinate synthetase family. In terms of assembly, homodimer. Requires Mg(2+) as cofactor.

It is found in the cytoplasm. It catalyses the reaction IMP + L-aspartate + GTP = N(6)-(1,2-dicarboxyethyl)-AMP + GDP + phosphate + 2 H(+). It participates in purine metabolism; AMP biosynthesis via de novo pathway; AMP from IMP: step 1/2. Functionally, plays an important role in the de novo pathway of purine nucleotide biosynthesis. Catalyzes the first committed step in the biosynthesis of AMP from IMP. The polypeptide is Adenylosuccinate synthetase (Synechococcus sp. (strain CC9902)).